The following is a 661-amino-acid chain: Zeaxanthin epoxidase, chloroplastic (661 aa).

The transit peptide at 1–59 (MLLFRATLLPSPPFFHKTYFSHLSPVIFSDDPLPVSLQRNRVSGCRKQKWRQIRTLALQ) directs the protein to the chloroplast. Residues 81–109 (RILIAGGGIGGLVLALAAKKKGFDALVFE) and 359–372 (IFTWGKGRVTLLGD) each bind FAD. An FHA domain is found at 555-609 (HIIGSISHDDSEGISIHLPFPQVHKTHARIACKDNIFYLTDLQSQYGTWITDNEG).

It depends on FAD as a cofactor. In terms of tissue distribution, expressed in flower buds, lips and leaves. Detected in roots.

The protein resides in the plastid. The protein localises to the chloroplast. It carries out the reaction all-trans-zeaxanthin + 4 reduced [2Fe-2S]-[ferredoxin] + 2 O2 + 4 H(+) = all-trans-violaxanthin + 4 oxidized [2Fe-2S]-[ferredoxin] + 2 H2O. It functions in the pathway plant hormone biosynthesis; abscisate biosynthesis. Zeaxanthin epoxidase that plays an important role in the xanthophyll cycle and abscisic acid (ABA) biosynthesis. Converts zeaxanthin into antheraxanthin and subsequently violaxanthin. This chain is Zeaxanthin epoxidase, chloroplastic (ZEP), found in Oncidium hybrid cultivar (Orchid).